Here is a 648-residue protein sequence, read N- to C-terminus: Spike protein P3 (648 aa).

Interacts with P6.

It localises to the virion membrane. P3 protein is necessary for adsorption onto host cells. Attaches to a type IV pilus of the host. The chain is Spike protein P3 (P3) from Pseudomonas savastanoi pv. phaseolicola (Pseudomonas syringae pv. phaseolicola).